The primary structure comprises 528 residues: Phosphoenolpyruvate carboxykinase (ATP) (528 aa).

Substrate-binding residues include R56, Y192, and K198. Residues K198, H217, and 233–241 (GLSGTGKTT) contribute to the ATP site. Mn(2+)-binding residues include K198 and H217. Mn(2+) is bound at residue D254. Residues E282, R319, and T444 each contribute to the ATP site. R319 lines the substrate pocket.

Belongs to the phosphoenolpyruvate carboxykinase (ATP) family. Mn(2+) serves as cofactor.

It is found in the cytoplasm. The enzyme catalyses oxaloacetate + ATP = phosphoenolpyruvate + ADP + CO2. It participates in carbohydrate biosynthesis; gluconeogenesis. Functionally, involved in the gluconeogenesis. Catalyzes the conversion of oxaloacetate (OAA) to phosphoenolpyruvate (PEP) through direct phosphoryl transfer between the nucleoside triphosphate and OAA. The sequence is that of Phosphoenolpyruvate carboxykinase (ATP) from Bacillus cytotoxicus (strain DSM 22905 / CIP 110041 / 391-98 / NVH 391-98).